We begin with the raw amino-acid sequence, 295 residues long: Protease HtpX homolog (295 aa).

2 helical membrane passes run 6–26 (IGLF…VTSV) and 40–60 (LSSL…VSLL). Zn(2+) is bound at residue His148. Residue Glu149 is part of the active site. His152 provides a ligand contact to Zn(2+). 2 helical membrane-spanning segments follow: residues 163–183 (LIQG…SYAL) and 198–218 (IANI…VAYF). Glu223 is a Zn(2+) binding site.

The protein belongs to the peptidase M48B family. Zn(2+) serves as cofactor.

The protein localises to the cell inner membrane. This is Protease HtpX homolog from Leptospira interrogans serogroup Icterohaemorrhagiae serovar copenhageni (strain Fiocruz L1-130).